The following is a 115-amino-acid chain: Large ribosomal subunit protein uL22 (115 aa).

The protein belongs to the universal ribosomal protein uL22 family. In terms of assembly, part of the 50S ribosomal subunit.

This protein binds specifically to 23S rRNA; its binding is stimulated by other ribosomal proteins, e.g. L4, L17, and L20. It is important during the early stages of 50S assembly. It makes multiple contacts with different domains of the 23S rRNA in the assembled 50S subunit and ribosome. In terms of biological role, the globular domain of the protein is located near the polypeptide exit tunnel on the outside of the subunit, while an extended beta-hairpin is found that lines the wall of the exit tunnel in the center of the 70S ribosome. The polypeptide is Large ribosomal subunit protein uL22 (rplV) (Wolbachia pipientis wMel).